A 303-amino-acid chain; its full sequence is Glutamyl-Q tRNA(Asp) synthetase (303 aa).

L-glutamate is bound by residues arginine 9–serine 13 and glutamate 45. Positions proline 12–asparagine 22 match the 'HIGH' region motif. Zn(2+) contacts are provided by cysteine 100, cysteine 102, tyrosine 125, and cysteine 129. Residues tyrosine 184 and arginine 202 each coordinate L-glutamate. The 'KMSKS' region motif lies at arginine 240–arginine 244. Residue lysine 243 coordinates ATP.

This sequence belongs to the class-I aminoacyl-tRNA synthetase family. GluQ subfamily. It depends on Zn(2+) as a cofactor.

Functionally, catalyzes the tRNA-independent activation of glutamate in presence of ATP and the subsequent transfer of glutamate onto a tRNA(Asp). Glutamate is transferred on the 2-amino-5-(4,5-dihydroxy-2-cyclopenten-1-yl) moiety of the queuosine in the wobble position of the QUC anticodon. This Deinococcus geothermalis (strain DSM 11300 / CIP 105573 / AG-3a) protein is Glutamyl-Q tRNA(Asp) synthetase.